We begin with the raw amino-acid sequence, 453 residues long: Cysteine desulfurase, mitochondrial (453 aa).

A mitochondrion-targeting transit peptide spans methionine 1–threonine 34. Residues alanine 123 to threonine 124, asparagine 203, glutamine 231, and serine 251 to histidine 253 contribute to the pyridoxal 5'-phosphate site. N6-(pyridoxal phosphate)lysine is present on lysine 254. Threonine 291 contributes to the pyridoxal 5'-phosphate binding site. The Cysteine persulfide intermediate role is filled by cysteine 377. Cysteine 377 serves as a coordination point for [2Fe-2S] cluster.

This sequence belongs to the class-V pyridoxal-phosphate-dependent aminotransferase family. NifS/IscS subfamily. Interacts with FH. Interacts with SUFE1. Pyridoxal 5'-phosphate is required as a cofactor.

The protein localises to the mitochondrion. The catalysed reaction is (sulfur carrier)-H + L-cysteine = (sulfur carrier)-SH + L-alanine. Its activity is regulated as follows. Threefold increase in the catalytic activity in the presence of FH (frataxin). 30-fold increase in the catalytic activity in the presence of SUFE1. Functionally, catalyzes the removal of elemental sulfur from cysteine to produce alanine. Supplies the inorganic sulfur for iron-sulfur (Fe-S) clusters. This Arabidopsis thaliana (Mouse-ear cress) protein is Cysteine desulfurase, mitochondrial.